A 449-amino-acid polypeptide reads, in one-letter code: TNF receptor-associated factor family protein DDB_G0272340 (449 aa).

The RING-type; degenerate zinc finger occupies 33 to 76 (CPICEECIMDVNKCEALQCKEGHVHCRLCWMKSLESKKECMTCR). TRAF-type zinc fingers lie at residues 133-187 (GHIK…IDDS) and 189-251 (VHYS…SELS). A coiled-coil region spans residues 263 to 309 (MEATIDQHICKFEKSEKEYKKLELEYNRLKDDFKILQSELKVIRELK). Residues 311 to 437 (NYQNKWVITN…QNSVTLNINI (127 aa)) enclose the MATH domain.

Belongs to the TNF receptor-associated factor family. A subfamily.

The protein resides in the cytoplasm. Its function is as follows. Probable adapter protein and signal transducer that links members of the tumor necrosis factor receptor family to different signaling pathways by association with the receptor cytoplasmic domain and kinases. The chain is TNF receptor-associated factor family protein DDB_G0272340 from Dictyostelium discoideum (Social amoeba).